The chain runs to 190 residues: Heme-binding protein 1 (190 aa).

This sequence belongs to the HEBP family. Monomer. As to expression, ubiquitously expressed. Extremely abundant in liver.

The protein resides in the cytoplasm. May bind free porphyrinogens that may be present in the cell and thus facilitate removal of these potentially toxic compound. Binds with a high affinity to one molecule of heme or porphyrins. It binds metalloporphyrins, free porphyrins and N-methylprotoporphyrin with similar affinities. The chain is Heme-binding protein 1 (Hebp1) from Mus musculus (Mouse).